Consider the following 391-residue polypeptide: Carbamoyl phosphate synthase small chain (391 aa).

The interval 1–187 is CPSase; sequence MAGVKERAVL…PLPYAWPTLK (187 aa). Positions 50, 239, and 241 each coordinate L-glutamine. Residues 191–376 enclose the Glutamine amidotransferase type-1 domain; sequence RIVVMDFGIK…LEEVEAFHGA (186 aa). Cysteine 266 acts as the Nucleophile in catalysis. The L-glutamine site is built by leucine 267, glutamine 270, asparagine 308, glycine 310, and tyrosine 311. Active-site residues include histidine 349 and glutamate 351.

Belongs to the CarA family. In terms of assembly, composed of two chains; the small (or glutamine) chain promotes the hydrolysis of glutamine to ammonia, which is used by the large (or ammonia) chain to synthesize carbamoyl phosphate. Tetramer of heterodimers (alpha,beta)4.

The enzyme catalyses hydrogencarbonate + L-glutamine + 2 ATP + H2O = carbamoyl phosphate + L-glutamate + 2 ADP + phosphate + 2 H(+). The catalysed reaction is L-glutamine + H2O = L-glutamate + NH4(+). It functions in the pathway amino-acid biosynthesis; L-arginine biosynthesis; carbamoyl phosphate from bicarbonate: step 1/1. Its pathway is pyrimidine metabolism; UMP biosynthesis via de novo pathway; (S)-dihydroorotate from bicarbonate: step 1/3. Its function is as follows. Small subunit of the glutamine-dependent carbamoyl phosphate synthetase (CPSase). CPSase catalyzes the formation of carbamoyl phosphate from the ammonia moiety of glutamine, carbonate, and phosphate donated by ATP, constituting the first step of 2 biosynthetic pathways, one leading to arginine and/or urea and the other to pyrimidine nucleotides. The small subunit (glutamine amidotransferase) binds and cleaves glutamine to supply the large subunit with the substrate ammonia. The protein is Carbamoyl phosphate synthase small chain of Thermus thermophilus (strain ATCC BAA-163 / DSM 7039 / HB27).